A 325-amino-acid polypeptide reads, in one-letter code: MPSGCGDDADSTGNALRRLPHVRKRIGKRKHLDIYRRLLRVFPSFVALNRLLGGLFPPELQKYRRRLFIEVRLSRRIPDCVLVFLPPDSGSRGIVYCYVIEFKTTYSDADDQSVRWHATHSLQYAEGLRQLKGALVDFDFLRLPRGGGQVWSVVPSLVFFQQKADRPSFYRAFRSGRFDLCTDSVLDYLGRRQDESVAHLLAATRRRLLRAARGKRAALPRARASAVAGGRGGGNARRGLARGRAHGPGAQTVSASGAEGSGSQGTDLLRGSRRARVRGGGAVEPAVRARRRTVAADAATTTVSSAFVVPRDRRGRSFRRPTRSL.

The segment at 222 to 286 is disordered; sequence ARASAVAGGR…VRGGGAVEPA (65 aa). A compositionally biased stretch (low complexity) spans 247 to 258; it reads GPGAQTVSASGA.

Belongs to the herpesviridae UL24 family.

It localises to the virion. Its subcellular location is the host cytoplasm. The protein resides in the host nucleus. It is found in the host nucleolus. The protein localises to the host Golgi apparatus. In terms of biological role, may participate in nuclear egress of viral particles. Plays a role in the dispersal of several host nucleolar proteins including NCL/nucleolin and NPM1. Since deletion of host NCL/nucleolin negatively impact on nuclear egress, UL76 supposedly acts on this process through its effect on host nucleoli. Induces cell cycle arrest in host cells at the G2/M phase following by apoptosis. The mechanism involves the inhibition of host mitotic complex cyclinB/CDK1. This chain is Protein UL76 (UL76), found in Human cytomegalovirus (strain Merlin) (HHV-5).